A 520-amino-acid polypeptide reads, in one-letter code: GMP synthase [glutamine-hydrolyzing] (520 aa).

A Glutamine amidotransferase type-1 domain is found at 9–202 (SVLIIDFGSQ…VHNIAGITGD (194 aa)). Catalysis depends on Cys-86, which acts as the Nucleophile. Catalysis depends on residues His-176 and Glu-178. A GMPS ATP-PPase domain is found at 203-395 (WSMSAYRAKA…LGLPDSFIGR (193 aa)). Residue 230-236 (SGGVDSS) coordinates ATP.

As to quaternary structure, homodimer.

It catalyses the reaction XMP + L-glutamine + ATP + H2O = GMP + L-glutamate + AMP + diphosphate + 2 H(+). It functions in the pathway purine metabolism; GMP biosynthesis; GMP from XMP (L-Gln route): step 1/1. Functionally, catalyzes the synthesis of GMP from XMP. In Allorhizobium ampelinum (strain ATCC BAA-846 / DSM 112012 / S4) (Agrobacterium vitis (strain S4)), this protein is GMP synthase [glutamine-hydrolyzing].